We begin with the raw amino-acid sequence, 114 residues long: Mobility group protein 1A (114 aa).

Positions 5 to 71 form a DNA-binding region, HMG box; sequence PKRPLSAYML…EYEKAMKEFE (67 aa). A disordered region spans residues 69–114; sequence EFERNGGDKSSGASTKKRGKAAEKKKPAKKSKKKDSEDDEEEDESD. Positions 105-114 are enriched in acidic residues; that stretch reads EDDEEEDESD.

It belongs to the HMGB family.

The protein localises to the nucleus. The protein resides in the chromosome. Its function is as follows. Found in condensed chromomeres. Binds preferentially to AT-rich DNA. This chain is Mobility group protein 1A (HMG1A), found in Chironomus tentans (Midge).